Reading from the N-terminus, the 397-residue chain is Elongation factor Tu (397 aa).

Residues 10–207 (KPHVNIGTIG…AVDESIPEPV (198 aa)) form the tr-type G domain. Residues 19–26 (GHVDHGKT) form a G1 region. 19–26 (GHVDHGKT) serves as a coordination point for GTP. Thr26 is a Mg(2+) binding site. Residues 63 to 67 (GITIN) are G2. Residues 84–87 (DAPG) are G3. GTP contacts are provided by residues 84 to 88 (DAPGH) and 139 to 142 (NKSD). A G4 region spans residues 139–142 (NKSD). The G5 stretch occupies residues 177-179 (SGL).

This sequence belongs to the TRAFAC class translation factor GTPase superfamily. Classic translation factor GTPase family. EF-Tu/EF-1A subfamily. Monomer.

The protein localises to the cytoplasm. The enzyme catalyses GTP + H2O = GDP + phosphate + H(+). Functionally, GTP hydrolase that promotes the GTP-dependent binding of aminoacyl-tRNA to the A-site of ribosomes during protein biosynthesis. This chain is Elongation factor Tu, found in Clavibacter michiganensis subsp. michiganensis (strain NCPPB 382).